We begin with the raw amino-acid sequence, 865 residues long: Probable alpha/beta-glucosidase ARB_02101 (865 aa).

The signal sequence occupies residues 1-21 (MFGRTLALAAVFATTVLSAAA). 2 N-linked (GlcNAc...) asparagine glycosylation sites follow: Asn101 and Asn299. Asp428 functions as the Nucleophile in the catalytic mechanism. Glu431 is an active-site residue. N-linked (GlcNAc...) asparagine glycosylation occurs at Asn515. Catalysis depends on Asp548, which acts as the Proton donor. Residues Asn549, Asn585, and Asn748 are each glycosylated (N-linked (GlcNAc...) asparagine).

Belongs to the glycosyl hydrolase 31 family.

The protein localises to the secreted. The catalysed reaction is Hydrolysis of terminal, non-reducing (1-&gt;4)-linked alpha-D-glucose residues with release of alpha-D-glucose.. The enzyme catalyses Hydrolysis of terminal, non-reducing beta-D-glucosyl residues with release of beta-D-glucose.. In terms of biological role, glucosidase involved in the degradation of cellulosic biomass. Has both alpha- and beta-glucosidase activity. This is Probable alpha/beta-glucosidase ARB_02101 from Arthroderma benhamiae (strain ATCC MYA-4681 / CBS 112371) (Trichophyton mentagrophytes).